A 69-amino-acid chain; its full sequence is uncharacterized protein (69 aa).

Residues 32 to 54 traverse the membrane as a helical segment; that stretch reads MLGAIDVAVAVASVPTLFVVTAI.

The protein localises to the membrane. This is an uncharacterized protein from Sinorhizobium fredii (strain NBRC 101917 / NGR234).